Reading from the N-terminus, the 241-residue chain is MAVLCSSSTVILSSSSVKSSGSERKSPFLGFSLTAISKPSVRVGIYANSKRGLQVKCEAEPTTTTSLVPANQRWMFDEEEANGPDIWNTTWYPKASDHVNTDKPWFVVDATDKILGRLASTIANHIRGKNLASYTPSVDMGAFVIVVNAEKVAVSGKKRNQKLYRRHSGRPGGMTVETFDQLQQRIPERIVEHAVRGMLPKGRLGRALFNHLKVYKGPDHPHEAQKPLDLPIRDKRIQLQK.

Residues 1–50 (MAVLCSSSTVILSSSSVKSSGSERKSPFLGFSLTAISKPSVRVGIYANSK) constitute a chloroplast transit peptide.

Belongs to the universal ribosomal protein uL13 family. Part of the 50S ribosomal subunit.

The protein resides in the plastid. Its subcellular location is the chloroplast. This Arabidopsis thaliana (Mouse-ear cress) protein is Large ribosomal subunit protein uL13c (RPL13).